We begin with the raw amino-acid sequence, 1080 residues long: ATP-dependent helicase/deoxyribonuclease subunit B (1080 aa).

This sequence belongs to the helicase family. AddB/RexB type 2 subfamily. In terms of assembly, heterodimer of AddA and RexB. Requires Mg(2+) as cofactor.

Functionally, the heterodimer acts as both an ATP-dependent DNA helicase and an ATP-dependent, dual-direction single-stranded exonuclease. Recognizes the chi site generating a DNA molecule suitable for the initiation of homologous recombination. This subunit has 5' -&gt; 3' nuclease activity but not helicase activity. In Streptococcus mutans serotype c (strain ATCC 700610 / UA159), this protein is ATP-dependent helicase/deoxyribonuclease subunit B.